The sequence spans 179 residues: Large ribosomal subunit protein uL6 (179 aa).

It belongs to the universal ribosomal protein uL6 family. Part of the 50S ribosomal subunit.

Functionally, this protein binds to the 23S rRNA, and is important in its secondary structure. It is located near the subunit interface in the base of the L7/L12 stalk, and near the tRNA binding site of the peptidyltransferase center. The polypeptide is Large ribosomal subunit protein uL6 (Alkaliphilus oremlandii (strain OhILAs) (Clostridium oremlandii (strain OhILAs))).